Reading from the N-terminus, the 243-residue chain is Nuclear ubiquitous casein and cyclin-dependent kinase substrate 1 (243 aa).

The interval 1-243 (MSRPVRNRKV…SEDEAASGED (243 aa)) is disordered. At Tyr13 the chain carries Phosphotyrosine. Residues Ser14 and Ser19 each carry the phosphoserine modification. Tyr26 is modified (phosphotyrosine). Over residues 35 to 51 (KKIRSSPREAKNKRRSG) the composition is skewed to basic residues. A phosphoserine mark is found at Ser54, Ser58, Ser61, Ser73, Ser75, and Ser79. The span at 64–77 (KDVKTKKDDSHSAE) shows a compositional bias: basic and acidic residues. The span at 91–100 (QQRQAASKAA) shows a compositional bias: low complexity. Residues 111-124 (VGSEEEPEEDDEAP) show a composition bias toward acidic residues. A phosphoserine mark is found at Ser113, Ser130, Ser132, and Ser144. The segment covering 132-145 (SDEDFLMEDDDDSD) has biased composition (acidic residues). Over residues 149–174 (SKKKNKKMVKKSKPERKEKKMPKPRL) the composition is skewed to basic residues. Thr179 bears the Phosphothreonine mark. At Ser181 the chain carries Phosphoserine. Basic and acidic residues predominate over residues 197 to 206 (TSKEKTPSPK). Residue Thr202 is modified to Phosphothreonine. A phosphoserine mark is found at Ser204, Ser214, Ser223, Ser229, Ser234, and Ser240. The span at 232 to 243 (EGSEDEAASGED) shows a compositional bias: acidic residues.

As to quaternary structure, does not interact with RAD51. Post-translationally, phosphorylated in an ATM-dependent manner in response to DNA damage. Phosphorylated by CDK1 and casein kinase.

The protein resides in the nucleus. It is found in the chromosome. Its function is as follows. Chromatin-associated protein involved in DNA repair by promoting homologous recombination (HR). Binds double-stranded DNA (dsDNA) and secondary DNA structures, such as D-loop structures, but with less affinity than RAD51AP1. The polypeptide is Nuclear ubiquitous casein and cyclin-dependent kinase substrate 1 (Rattus norvegicus (Rat)).